The primary structure comprises 342 residues: tRNA N6-adenosine threonylcarbamoyltransferase (342 aa).

Residues His111 and His115 each contribute to the Fe cation site. Residues 133-137, Asp166, Gly179, Asp183, and Asn272 each bind substrate; that span reads AVSGG. Asp300 is a Fe cation binding site.

The protein belongs to the KAE1 / TsaD family. Fe(2+) is required as a cofactor.

The protein localises to the cytoplasm. It catalyses the reaction L-threonylcarbamoyladenylate + adenosine(37) in tRNA = N(6)-L-threonylcarbamoyladenosine(37) in tRNA + AMP + H(+). Required for the formation of a threonylcarbamoyl group on adenosine at position 37 (t(6)A37) in tRNAs that read codons beginning with adenine. Is involved in the transfer of the threonylcarbamoyl moiety of threonylcarbamoyl-AMP (TC-AMP) to the N6 group of A37, together with TsaE and TsaB. TsaD likely plays a direct catalytic role in this reaction. In Geobacter sp. (strain M21), this protein is tRNA N6-adenosine threonylcarbamoyltransferase.